A 416-amino-acid polypeptide reads, in one-letter code: MMNGFSIANVQGYEIIDSRGNLTVRARVTLESGIRATGDAPSGASKGTREAVELRDKDGSVKGAVDSINYYISPALMGLDVREQGKIDRIMIELDGTENKSRLGANATIATSIAVAKTASISMGLEPFMYIGGARTHTLPVPLLNILNGGLHAGNMLKIQEFMVIPVKFDTLKEALIASTKIYKTLKSLVTERYGKIYTALGDEGGISPPLSVTEDALKLVHEAIKRSGMEGRVFMGMDAAASDFYNPEKGVYEIDNTSKSPDEMIEFYVDIASRYPLLYLEDPFEENDFSRYSELQSRIKNVIVTGDDLFTTNVRYLRKGIEMKSARGVIVKANQIGTLTETIQFFDLAKDNSIKTVVSHRSGETEDSFIADLAVGLNSDFIKTGAPSRGERTSKYNRLLEIENEFGLEYLGRRL.

Position 160 (Gln-160) interacts with (2R)-2-phosphoglycerate. Catalysis depends on Glu-204, which acts as the Proton donor. The Mg(2+) site is built by Asp-239, Glu-282, and Asp-308. Lys-333, Arg-362, Ser-363, and Lys-384 together coordinate (2R)-2-phosphoglycerate. The Proton acceptor role is filled by Lys-333.

The protein belongs to the enolase family. Mg(2+) serves as cofactor.

The protein localises to the cytoplasm. It is found in the secreted. It localises to the cell surface. The enzyme catalyses (2R)-2-phosphoglycerate = phosphoenolpyruvate + H2O. It functions in the pathway carbohydrate degradation; glycolysis; pyruvate from D-glyceraldehyde 3-phosphate: step 4/5. In terms of biological role, catalyzes the reversible conversion of 2-phosphoglycerate (2-PG) into phosphoenolpyruvate (PEP). It is essential for the degradation of carbohydrates via glycolysis. This is Enolase from Metallosphaera sedula (strain ATCC 51363 / DSM 5348 / JCM 9185 / NBRC 15509 / TH2).